The following is a 559-amino-acid chain: Suppressor of tumorigenicity 7 protein-like (559 aa).

The next 3 membrane-spanning stretches (helical) occupy residues 39–59, 83–103, and 513–533; these read GLAN…LYAL, FYVA…IFEW, and LPFF…LAFL.

It belongs to the ST7 family. In terms of tissue distribution, ubiquitously expressed.

It localises to the membrane. This Mus musculus (Mouse) protein is Suppressor of tumorigenicity 7 protein-like (St7l).